A 373-amino-acid polypeptide reads, in one-letter code: Queuine tRNA-ribosyltransferase (373 aa).

D91 serves as the catalytic Proton acceptor. Residues 91 to 95, D145, and Q187 contribute to the substrate site; that span reads DSGGF. An RNA binding region spans residues 245–251; that stretch reads GVGTPED. D264 serves as the catalytic Nucleophile. The interval 269–273 is RNA binding; important for wobble base 34 recognition; the sequence is TRNAR. Zn(2+)-binding residues include C302, C304, C307, and H333.

It belongs to the queuine tRNA-ribosyltransferase family. Homodimer. Within each dimer, one monomer is responsible for RNA recognition and catalysis, while the other monomer binds to the replacement base PreQ1. The cofactor is Zn(2+).

It catalyses the reaction 7-aminomethyl-7-carbaguanine + guanosine(34) in tRNA = 7-aminomethyl-7-carbaguanosine(34) in tRNA + guanine. The protein operates within tRNA modification; tRNA-queuosine biosynthesis. In terms of biological role, catalyzes the base-exchange of a guanine (G) residue with the queuine precursor 7-aminomethyl-7-deazaguanine (PreQ1) at position 34 (anticodon wobble position) in tRNAs with GU(N) anticodons (tRNA-Asp, -Asn, -His and -Tyr). Catalysis occurs through a double-displacement mechanism. The nucleophile active site attacks the C1' of nucleotide 34 to detach the guanine base from the RNA, forming a covalent enzyme-RNA intermediate. The proton acceptor active site deprotonates the incoming PreQ1, allowing a nucleophilic attack on the C1' of the ribose to form the product. After dissociation, two additional enzymatic reactions on the tRNA convert PreQ1 to queuine (Q), resulting in the hypermodified nucleoside queuosine (7-(((4,5-cis-dihydroxy-2-cyclopenten-1-yl)amino)methyl)-7-deazaguanosine). The sequence is that of Queuine tRNA-ribosyltransferase from Syntrophobacter fumaroxidans (strain DSM 10017 / MPOB).